The following is a 51-amino-acid chain: uncharacterized protein (51 aa).

The disordered stretch occupies residues 1-51 (MKRKAEVNEAIKNNNTPTESMDPNSYKTQYHDDPNFRGANRNSKQGQQGGM). 2 stretches are compositionally biased toward polar residues: residues 11–28 (IKNN…SYKT) and 40–51 (NRNSKQGQQGGM).

This is an uncharacterized protein from Bacillus subtilis (strain 168).